The sequence spans 266 residues: Glucosamine-6-phosphate deaminase (266 aa).

Aspartate 72 (proton acceptor; for enolization step) is an active-site residue. Catalysis depends on aspartate 141, which acts as the For ring-opening step. Histidine 143 acts as the Proton acceptor; for ring-opening step in catalysis. The active-site For ring-opening step is the glutamate 148.

The protein belongs to the glucosamine/galactosamine-6-phosphate isomerase family. NagB subfamily. In terms of assembly, homohexamer.

It catalyses the reaction alpha-D-glucosamine 6-phosphate + H2O = beta-D-fructose 6-phosphate + NH4(+). It participates in amino-sugar metabolism; N-acetylneuraminate degradation; D-fructose 6-phosphate from N-acetylneuraminate: step 5/5. Its activity is regulated as follows. Allosterically activated by N-acetylglucosamine 6-phosphate (GlcNAc6P). Functionally, catalyzes the reversible isomerization-deamination of glucosamine 6-phosphate (GlcN6P) to form fructose 6-phosphate (Fru6P) and ammonium ion. The protein is Glucosamine-6-phosphate deaminase of Aliivibrio salmonicida (strain LFI1238) (Vibrio salmonicida (strain LFI1238)).